The sequence spans 405 residues: Envelope glycoprotein G (405 aa).

The signal sequence occupies residues 1 to 19 (MLAVGATLCLLSFLTGATG). Asparagine 83, asparagine 138, asparagine 174, asparagine 221, and asparagine 288 each carry an N-linked (GlcNAc...) asparagine; by host glycan. A helical transmembrane segment spans residues 389 to 405 (LKTVYICLALIGLAHVP).

Belongs to the alphaherpesvirinae glycoprotein G family.

The protein localises to the virion membrane. Functionally, chemokine-binding protein that inhibits neutrophils' chemotaxis. The sequence is that of Envelope glycoprotein G (gG) from Equine herpesvirus 4 (strain 1942) (EHV-4).